Reading from the N-terminus, the 311-residue chain is Lipoyl synthase (311 aa).

Residues C47, C52, C58, C73, C77, C80, and S286 each contribute to the [4Fe-4S] cluster site. The 218-residue stretch at 59-276 (WSRHTATYLA…RSVGESLGLF (218 aa)) folds into the Radical SAM core domain.

This sequence belongs to the radical SAM superfamily. Lipoyl synthase family. [4Fe-4S] cluster is required as a cofactor.

The protein localises to the cytoplasm. The catalysed reaction is [[Fe-S] cluster scaffold protein carrying a second [4Fe-4S](2+) cluster] + N(6)-octanoyl-L-lysyl-[protein] + 2 oxidized [2Fe-2S]-[ferredoxin] + 2 S-adenosyl-L-methionine + 4 H(+) = [[Fe-S] cluster scaffold protein] + N(6)-[(R)-dihydrolipoyl]-L-lysyl-[protein] + 4 Fe(3+) + 2 hydrogen sulfide + 2 5'-deoxyadenosine + 2 L-methionine + 2 reduced [2Fe-2S]-[ferredoxin]. Its pathway is protein modification; protein lipoylation via endogenous pathway; protein N(6)-(lipoyl)lysine from octanoyl-[acyl-carrier-protein]: step 2/2. Catalyzes the radical-mediated insertion of two sulfur atoms into the C-6 and C-8 positions of the octanoyl moiety bound to the lipoyl domains of lipoate-dependent enzymes, thereby converting the octanoylated domains into lipoylated derivatives. This chain is Lipoyl synthase, found in Chlamydia trachomatis serovar A (strain ATCC VR-571B / DSM 19440 / HAR-13).